The sequence spans 391 residues: ETS-related transcription factor Elf-3 (391 aa).

Residues 65–151 form the PNT domain; sequence DPLAVLHLAE…AQLRDLTSNS (87 aa). Residues 200-271 form a disordered region; it reads YCSTYGPGAP…HGKRKRGRPR (72 aa). Positions 211 to 229 are enriched in polar residues; that stretch reads PGSSDVSTARTATPQSSHA. The segment covering 242–261 has biased composition (basic and acidic residues); the sequence is TESKVFPRDGFPDYKKGEPK. Over residues 262 to 271 the composition is skewed to basic residues; the sequence is HGKRKRGRPR. The ETS DNA-binding region spans 293–375; it reads THLWEFIRDI…DGRRLVYKFG (83 aa).

The protein belongs to the ETS family. Interacts with TBP. Interacts with CREBBP and EP300; these act as transcriptional coactivators of ELF3 and positively modulate its function. Interacts with XRCC5/KU86 and XRCC6/KU70; these inhibit the ability of ELF3 to bind DNA and negatively modulate its transcriptional activity. Associated with CLND7 and POU2F3. Interacts with ZNF768. In terms of tissue distribution, expressed in small intestine, colon, lung, kidney and uterus. Also expressed in the corneal epithelium and conjunctiva of the developing and adult eye. Not detected in liver, spleen, thymus, brain, heart, skeletal muscle or ovary.

Its subcellular location is the cytoplasm. It localises to the nucleus. Its function is as follows. Transcriptional activator that binds and transactivates ETS sequences containing the consensus nucleotide core sequence GGA[AT]. Acts synergistically with POU2F3 to transactivate the SPRR2A promoter and with RUNX1 to transactivate the ANGPT1 promoter. Also transactivates collagenase, CCL20, CLND7, FLG, KRT8, NOS2, PTGS2, SPRR2B, TGFBR2 and TGM3 promoters. Represses KRT4 promoter activity. Involved in mediating vascular inflammation. May play an important role in epithelial cell differentiation and tumorigenesis. May be a critical downstream effector of the ERBB2 signaling pathway. May be associated with mammary gland development and involution. Plays an important role in the regulation of transcription with TATA-less promoters in preimplantation embryos, which is essential in preimplantation development. The chain is ETS-related transcription factor Elf-3 from Mus musculus (Mouse).